We begin with the raw amino-acid sequence, 312 residues long: Methionyl-tRNA formyltransferase (312 aa).

Residue serine 109–proline 112 coordinates (6S)-5,6,7,8-tetrahydrofolate.

This sequence belongs to the Fmt family.

The enzyme catalyses L-methionyl-tRNA(fMet) + (6R)-10-formyltetrahydrofolate = N-formyl-L-methionyl-tRNA(fMet) + (6S)-5,6,7,8-tetrahydrofolate + H(+). Functionally, attaches a formyl group to the free amino group of methionyl-tRNA(fMet). The formyl group appears to play a dual role in the initiator identity of N-formylmethionyl-tRNA by promoting its recognition by IF2 and preventing the misappropriation of this tRNA by the elongation apparatus. This chain is Methionyl-tRNA formyltransferase, found in Caulobacter sp. (strain K31).